The sequence spans 791 residues: Valine--tRNA ligase (791 aa).

Residues 40 to 50 (PTVSGKMHMGH) carry the 'HIGH' region motif. Positions 521-525 (KMSKS) match the 'KMSKS' region motif. Lysine 524 contacts ATP.

The protein belongs to the class-I aminoacyl-tRNA synthetase family. ValS type 2 subfamily.

The protein resides in the cytoplasm. It carries out the reaction tRNA(Val) + L-valine + ATP = L-valyl-tRNA(Val) + AMP + diphosphate. Catalyzes the attachment of valine to tRNA(Val). As ValRS can inadvertently accommodate and process structurally similar amino acids such as threonine, to avoid such errors, it has a 'posttransfer' editing activity that hydrolyzes mischarged Thr-tRNA(Val) in a tRNA-dependent manner. The protein is Valine--tRNA ligase of Thermoplasma acidophilum (strain ATCC 25905 / DSM 1728 / JCM 9062 / NBRC 15155 / AMRC-C165).